An 826-amino-acid polypeptide reads, in one-letter code: Zinc phosphodiesterase ELAC protein 2 (826 aa).

Residues 1–16 (MWALCSLLRSAAGRTM) constitute a mitochondrion transit peptide. Over residues 15-24 (TMSQGRTISQ) the composition is skewed to polar residues. Disordered regions lie at residues 15 to 51 (TMSQ…PSGC) and 189 to 231 (QRRG…VSQR). Residues 27–38 (ARRERPRKDPLR) show a composition bias toward basic and acidic residues. Phosphoserine occurs at positions 199, 208, 212, 229, 618, and 736. Over residues 208-224 (SPERSSDSESNENEPHL) the composition is skewed to basic and acidic residues. Positions 798–826 (ELAGGLEDGEPQQKRAHTEEPQAKKVRAQ) are disordered. Basic and acidic residues predominate over residues 808-820 (PQQKRAHTEEPQA).

This sequence belongs to the RNase Z family. Homodimer. Interacts with PTCD1. The cofactor is Zn(2+).

Its subcellular location is the mitochondrion. The protein localises to the mitochondrion matrix. The protein resides in the mitochondrion nucleoid. It localises to the nucleus. The catalysed reaction is Endonucleolytic cleavage of RNA, removing extra 3' nucleotides from tRNA precursor, generating 3' termini of tRNAs. A 3'-hydroxy group is left at the tRNA terminus and a 5'-phosphoryl group is left at the trailer molecule.. Functionally, zinc phosphodiesterase, which displays mitochondrial tRNA 3'-processing endonuclease activity. Involved in tRNA maturation, by removing a 3'-trailer from precursor tRNA. Associates with mitochondrial DNA complexes at the nucleoids to initiate RNA processing and ribosome assembly. This Gorilla gorilla gorilla (Western lowland gorilla) protein is Zinc phosphodiesterase ELAC protein 2 (ELAC2).